The primary structure comprises 163 residues: Cyanate hydratase (163 aa).

Active-site residues include arginine 103, glutamate 106, and serine 129.

The protein belongs to the cyanase family.

The catalysed reaction is cyanate + hydrogencarbonate + 3 H(+) = NH4(+) + 2 CO2. Catalyzes the reaction of cyanate with bicarbonate to produce ammonia and carbon dioxide. The chain is Cyanate hydratase from Talaromyces stipitatus (strain ATCC 10500 / CBS 375.48 / QM 6759 / NRRL 1006) (Penicillium stipitatum).